A 374-amino-acid chain; its full sequence is Guanine nucleotide-binding protein subunit alpha-15 (374 aa).

A G-alpha domain is found at 41 to 374 (GELKLLLLGT…ARYLDEINLL (334 aa)). Residues 44–57 (KLLLLGTGESGKST) form a G1 motif region. GTP contacts are provided by residues 49–56 (GTGESGKS), 183–189 (LRSRMPT), 208–212 (DVGGQ), 277–280 (NKTD), and A346. Mg(2+) contacts are provided by S56 and T189. The tract at residues 181-189 (DVLRSRMPT) is G2 motif. Residues 204–213 (LRIVDVGGQK) are G3 motif. The G4 motif stretch occupies residues 273–280 (ILFLNKTD). Positions 344–349 (TCATDT) are G5 motif.

It belongs to the G-alpha family. G(q) subfamily. G proteins are composed of 3 units; alpha, beta and gamma. The alpha chain contains the guanine nucleotide binding site.

Guanine nucleotide-binding proteins (G proteins) are involved as modulators or transducers in various transmembrane signaling systems. The sequence is that of Guanine nucleotide-binding protein subunit alpha-15 (GNA15) from Oryctolagus cuniculus (Rabbit).